The sequence spans 332 residues: MKNLRNRSFLTLLDFSTAEVEFLLKLSEDLKRAKYAGIEQQKLVGKNIALIFEKDSTRTRCAFEVAAHDQGAHVTYLGPTGSQMGKKETSKDTARVLGGMYDGIEYRGFSQETVETLAEFSGVPVWNGLTDADHPTQVLADFLTAKECLHKPYKDIRFTYVGDGRNNVANALMIGASIVGMTYHLVCPKELEPDPELLSKCQEIAKTTGASIEITADIAEGVRDSDVLYTDVWVSMGEPDEVWKERIALLEPYRITQEMLNMTENPNVIFEHCLPSFHNIDTKVGYDIYEKYGLKEMEVSDEVFEGPHSVVFQEAENRMHTIKAVMVATLGD.

Residues 56 to 59, Q83, R107, and 134 to 137 each bind carbamoyl phosphate; these read STRT and HPTQ. Residues N167, D231, and 235–236 each bind L-ornithine; that span reads SM. Carbamoyl phosphate-binding positions include 273 to 274 and R318; that span reads CL.

It belongs to the aspartate/ornithine carbamoyltransferase superfamily. OTCase family.

It is found in the cytoplasm. It carries out the reaction carbamoyl phosphate + L-ornithine = L-citrulline + phosphate + H(+). It functions in the pathway amino-acid degradation; L-arginine degradation via ADI pathway; carbamoyl phosphate from L-arginine: step 2/2. Its function is as follows. Reversibly catalyzes the transfer of the carbamoyl group from carbamoyl phosphate (CP) to the N(epsilon) atom of ornithine (ORN) to produce L-citrulline. In Streptococcus agalactiae serotype III (strain NEM316), this protein is Ornithine carbamoyltransferase 1, catabolic (arcB1).